Consider the following 125-residue polypeptide: Holo-[acyl-carrier-protein] synthase (125 aa).

2 residues coordinate Mg(2+): Asp8 and Glu57.

This sequence belongs to the P-Pant transferase superfamily. AcpS family. Mg(2+) serves as cofactor.

The protein localises to the cytoplasm. It catalyses the reaction apo-[ACP] + CoA = holo-[ACP] + adenosine 3',5'-bisphosphate + H(+). Its function is as follows. Transfers the 4'-phosphopantetheine moiety from coenzyme A to a Ser of acyl-carrier-protein. This chain is Holo-[acyl-carrier-protein] synthase, found in Solibacter usitatus (strain Ellin6076).